The chain runs to 415 residues: Methylaspartate ammonia-lyase 2 (415 aa).

(2S,3S)-3-methyl-L-aspartate is bound at residue glutamine 173. Mg(2+) is bound by residues aspartate 238, glutamate 273, and aspartate 307. Position 329 (glutamine 329) interacts with (2S,3S)-3-methyl-L-aspartate. Lysine 331 functions as the Proton acceptor in the catalytic mechanism. Residue 360–361 (TC) coordinates (2S,3S)-3-methyl-L-aspartate.

The protein belongs to the methylaspartate ammonia-lyase family. In terms of assembly, homodimer. It depends on Mg(2+) as a cofactor.

It catalyses the reaction (2S,3S)-3-methyl-L-aspartate = mesaconate + NH4(+). It participates in amino-acid degradation; L-glutamate degradation via mesaconate pathway; acetate and pyruvate from L-glutamate: step 2/4. Involved in the methylaspartate cycle. Catalyzes the formation of the alpha,beta-unsaturated bond by the reversible anti elimination of ammonia from L-threo-beta-methylaspartate (L-threo-(2S,3S)-3-methylaspartate) to give mesaconate. This is Methylaspartate ammonia-lyase 2 from Carboxydothermus hydrogenoformans (strain ATCC BAA-161 / DSM 6008 / Z-2901).